The sequence spans 232 residues: MADEMDFYSSDYHNDDAFETPSKPPTSTSGRPKGSGAQGGGGMRFDTEEAREAALRKELEGVRKINEVIEGMIGTLERAKGNMGTVSQTVTNATTLLNTWTRMLSQTEHNQRLILNPEWKGATQDLLELEAEERRRQEEVERRAAEAERRREEARRKAEEEERRRAAAAAAAAAPAGRSVGRGTTRGRVRGSGLTRGASSSASGSETTRTTSGIARGGFGYTRGTARYRGAK.

Disordered regions lie at residues 1–44 (MADE…GGMR) and 133–232 (ERRR…RGAK). The stretch at 128 to 171 (ELEAEERRRQEEVERRAAEAERRREEARRKAEEEERRRAAAAAA) forms a coiled coil. Over residues 133–165 (ERRRQEEVERRAAEAERRREEARRKAEEEERRR) the composition is skewed to basic and acidic residues. Composition is skewed to low complexity over residues 167 to 183 (AAAA…VGRG) and 191 to 213 (GSGL…TTSG).

This sequence belongs to the DASH complex DUO1 family. As to quaternary structure, component of the DASH complex consisting of ASK1, DAD1, DAD2, DAD3, DAD4, DAM1, DUO1, HSK3, SPC19 and SPC34, with a stoichiometry of one copy of each subunit per complex. Multiple DASH complexes oligomerize to form a ring that encircles spindle microtubules and organizes the rod-like NDC80 complexes of the outer kinetochore. DASH complex oligomerization strengthens microtubule attachments. On cytoplasmic microtubules, DASH complexes appear to form patches instead of rings.

It is found in the nucleus. The protein resides in the cytoplasm. The protein localises to the cytoskeleton. Its subcellular location is the spindle pole. It localises to the chromosome. It is found in the centromere. The protein resides in the kinetochore. Functionally, component of the DASH complex that connects microtubules with kinetochores and couples microtubule depolymerisation to chromosome movement; it is involved in retrieving kinetochores to the spindle poles before their re-orientation on the spindle in early mitosis and allows microtubule depolymerization to pull chromosomes apart and resist detachment during anaphase. Kinetochores, consisting of a centromere-associated inner segment and a microtubule-contacting outer segment, play a crucial role in chromosome segregation by mediating the physical connection between centromeric DNA and microtubules. Kinetochores also serve as an input point for the spindle assembly checkpoint, which delays anaphase until all chromosomes have bioriented on the mitotic spindle. This chain is DASH complex subunit DUO1, found in Chaetomium thermophilum (strain DSM 1495 / CBS 144.50 / IMI 039719) (Thermochaetoides thermophila).